We begin with the raw amino-acid sequence, 158 residues long: MNIIEGNIRATGKKFALVVSRFNSFVVESLVEGALDTLERHGEVNSQDITLVRVPGAYELPIAAKKLAEKGTFDGIIALGAVIRGGTPHFEFVAGECNKGLAQVSLEFGIPVSFGVITTDSIEQAIERSGTKAGNKGAEAALGALEMVNVMANIEGAE.

5-amino-6-(D-ribitylamino)uracil contacts are provided by residues phenylalanine 22, alanine 57–glutamate 59, and alanine 81–isoleucine 83. (2S)-2-hydroxy-3-oxobutyl phosphate is bound at residue glycine 86–threonine 87. The active-site Proton donor is the histidine 89. Residue phenylalanine 114 coordinates 5-amino-6-(D-ribitylamino)uracil. Position 128 (arginine 128) interacts with (2S)-2-hydroxy-3-oxobutyl phosphate.

Belongs to the DMRL synthase family. As to quaternary structure, forms an icosahedral capsid composed of 60 subunits, arranged as a dodecamer of pentamers.

It catalyses the reaction (2S)-2-hydroxy-3-oxobutyl phosphate + 5-amino-6-(D-ribitylamino)uracil = 6,7-dimethyl-8-(1-D-ribityl)lumazine + phosphate + 2 H2O + H(+). The protein operates within cofactor biosynthesis; riboflavin biosynthesis; riboflavin from 2-hydroxy-3-oxobutyl phosphate and 5-amino-6-(D-ribitylamino)uracil: step 1/2. Functionally, catalyzes the formation of 6,7-dimethyl-8-ribityllumazine by condensation of 5-amino-6-(D-ribitylamino)uracil with 3,4-dihydroxy-2-butanone 4-phosphate. This is the penultimate step in the biosynthesis of riboflavin. The chain is 6,7-dimethyl-8-ribityllumazine synthase from Pseudoalteromonas atlantica (strain T6c / ATCC BAA-1087).